Consider the following 225-residue polypeptide: Insulin-induced gene 2 protein (225 aa).

Topologically, residues M1–L28 are cytoplasmic. Residues M29 to I51 form a helical membrane-spanning segment. The Lumenal segment spans residues Q52–A70. A helical membrane pass occupies residues W71–Y88. Topologically, residues P89–R103 are cytoplasmic. A helical membrane pass occupies residues E104–D126. Topologically, residues F127–N129 are lumenal. Residues N130–F148 traverse the membrane as a helical segment. The Cytoplasmic segment spans residues D149–S153. Phosphoserine; by PCK1 is present on S151. A helical transmembrane segment spans residues G154–N175. Residues G176 to R189 are Lumenal-facing. Residues S190–G207 form a helical membrane-spanning segment. Residues R208–E225 lie on the Cytoplasmic side of the membrane. A Cysteine sulfenic acid (-SOH); alternate modification is found at C215. A Glycyl cysteine thioester (Cys-Gly) (interchain with G-Cter in ubiquitin); alternate cross-link involves residue C215. The KxHxx signature appears at A219 to E225.

It belongs to the INSIG family. In terms of assembly, interacts with SCAP; interaction is direct and only takes place in the presence of sterols; it prevents interaction between SCAP and the coat protein complex II (COPII). Associates with the SCAP-SREBP complex (composed of SCAP and SREBF1/SREBP1 or SREBF2/SREBP2); association is mediated via its interaction with SCAP and only takes place in the presence of sterols. Interacts with RNF139. Interacts with RNF145. In terms of processing, phosphorylation at Ser-151 by PCK1 reduces binding to oxysterol, disrupting the interaction between INSIG2 and SCAP, thereby promoting nuclear translocation of SREBP proteins (SREBF1/SREBP1 or SREBF2/SREBP2) and subsequent transcription of downstream lipogenesis-related genes. Polyubiquitinated by AMFR/gp78 at Cys-215 in some tissues such as adipose tissues, undifferentiated myoblasts and liver, leading to its degradation. In differentiated myotubes, Cys-215 oxidation prevents ubiquitination at the same site, resulting in protein stabilization. Post-translationally, oxidized at Cys-215 in differentiated myotubes, preventing ubiquitination at the same site, and resulting in protein stabilization.

It is found in the endoplasmic reticulum membrane. Its function is as follows. Oxysterol-binding protein that mediates feedback control of cholesterol synthesis by controlling both endoplasmic reticulum to Golgi transport of SCAP and degradation of HMGCR. Acts as a negative regulator of cholesterol biosynthesis by mediating the retention of the SCAP-SREBP complex in the endoplasmic reticulum, thereby blocking the processing of sterol regulatory element-binding proteins (SREBPs) SREBF1/SREBP1 and SREBF2/SREBP2. Binds oxysterol, including 22-hydroxycholesterol, 24-hydroxycholesterol, 25-hydroxycholesterol and 27-hydroxycholesterol, regulating interaction with SCAP and retention of the SCAP-SREBP complex in the endoplasmic reticulum. In presence of oxysterol, interacts with SCAP, retaining the SCAP-SREBP complex in the endoplasmic reticulum, thereby preventing SCAP from escorting SREBF1/SREBP1 and SREBF2/SREBP2 to the Golgi. Sterol deprivation or phosphorylation by PCK1 reduce oxysterol-binding, disrupting the interaction between INSIG2 and SCAP, thereby promoting Golgi transport of the SCAP-SREBP complex, followed by processing and nuclear translocation of SREBF1/SREBP1 and SREBF2/SREBP2. Also regulates cholesterol synthesis by regulating degradation of HMGCR: initiates the sterol-mediated ubiquitin-mediated endoplasmic reticulum-associated degradation (ERAD) of HMGCR via recruitment of the reductase to the ubiquitin ligase RNF139. The chain is Insulin-induced gene 2 protein from Homo sapiens (Human).